We begin with the raw amino-acid sequence, 453 residues long: Wall-associated protein (453 aa).

A signal peptide spans 1–29 (MKMKRKLLSLVSVLTILLGAFWVTKIVKA). Residues 331–403 (GRASSRVKRQ…TASQTNVPTT (73 aa)) form a disordered region. The segment covering 342 to 403 (ETTTVTETTT…TASQTNVPTT (62 aa)) has biased composition (low complexity). The LPXTG sorting signal motif lies at 422–426 (LPSTG). The residue at position 425 (T425) is a Pentaglycyl murein peptidoglycan amidated threonine. Positions 426–453 (GEQAGLLLTTVGLVIVAVAGVYFYRTRR) are cleaved as a propeptide — removed by sortase.

Its subcellular location is the secreted. The protein resides in the cell wall. In Streptococcus mutans serotype c (strain ATCC 700610 / UA159), this protein is Wall-associated protein (wapA).